A 466-amino-acid polypeptide reads, in one-letter code: Asparagine--tRNA ligase (466 aa).

This sequence belongs to the class-II aminoacyl-tRNA synthetase family. In terms of assembly, homodimer.

It is found in the cytoplasm. It catalyses the reaction tRNA(Asn) + L-asparagine + ATP = L-asparaginyl-tRNA(Asn) + AMP + diphosphate + H(+). This Yersinia pseudotuberculosis serotype O:1b (strain IP 31758) protein is Asparagine--tRNA ligase.